Here is a 337-residue protein sequence, read N- to C-terminus: MGKLELLQCLTGHRGRAWGAGWHPKGNVLATCGEDKTIRIWAEDASQRWVAKTVLSDGHSRTIRDVAWSPCGQYLASASFDATVAIWDKKSGEFECNATLEGHENEVKSVSWSKSGSLLATCSRDKSVWVWEVAQEDEYECAAVLNTHTQDVKKVEWHPHEDILASASYDNTIKLYKEDLADSDWSSFDTLVSHESTVWSISFDGSGNRLASCSDDQTVKIWQEYKPGNEFGVSCPDNTPVWKCVCTLAGYHSRSVYDISWCKQSGLLATACGDDMVRIFKEVEGSSPHEPTFEMVGSKHAHSQDVNTVEWNPTVVGLLVTTSDDGDVKLWKYEPEE.

WD repeat units lie at residues 12–51 (GHRG…RWVA), 58–97 (GHSR…FECN), 102–141 (GHEN…EYEC), 147–186 (THTQ…SDWS), 193–232 (SHES…NEFG), 251–290 (YHSR…SPHE), and 301–337 (AHSQ…EPEE).

This sequence belongs to the WD repeat CIA1 family.

In terms of biological role, essential component of the cytosolic iron-sulfur (Fe/S) protein assembly machinery. Required for the maturation of extramitochondrial Fe/S proteins. This chain is Probable cytosolic iron-sulfur protein assembly protein Ciao1, found in Aedes aegypti (Yellowfever mosquito).